A 109-amino-acid polypeptide reads, in one-letter code: Small ribosomal subunit protein bS20 (109 aa).

Residues 1–26 (MANIKSAKKRAIQSEKRRKHNASRRS) are disordered.

Belongs to the bacterial ribosomal protein bS20 family.

Functionally, binds directly to 16S ribosomal RNA. This Hamiltonella defensa subsp. Acyrthosiphon pisum (strain 5AT) protein is Small ribosomal subunit protein bS20.